We begin with the raw amino-acid sequence, 69 residues long: Large ribosomal subunit protein bL28 (69 aa).

The interval 1–27 is disordered; the sequence is MSRRCSVSGKGPLVGNNVSHANNKTKR.

This sequence belongs to the bacterial ribosomal protein bL28 family.

This is Large ribosomal subunit protein bL28 from Sulfurovum sp. (strain NBC37-1).